Here is a 102-residue protein sequence, read N- to C-terminus: MQSQKIRIRLKAYDHKLLDVSVTEIVDTAKRTGARVAGPIPLPTVINKYCVLRGPHVDKKSRDQFEIRTHKRLIDILDPTQQTVDALMKLDLAAGVDVEIKL.

It belongs to the universal ribosomal protein uS10 family. Part of the 30S ribosomal subunit.

Involved in the binding of tRNA to the ribosomes. The protein is Small ribosomal subunit protein uS10 of Pelobacter propionicus (strain DSM 2379 / NBRC 103807 / OttBd1).